Consider the following 639-residue polypeptide: Chaperone protein DnaK (639 aa).

At T197 the chain carries Phosphothreonine; by autocatalysis. A disordered region spans residues 600 to 639 (SGAQGGAQAGPDMNAGQSNAGQNNGKQDDNVQDADFEEVK). The span at 613–624 (NAGQSNAGQNNG) shows a compositional bias: low complexity. The segment covering 629 to 639 (NVQDADFEEVK) has biased composition (acidic residues).

This sequence belongs to the heat shock protein 70 family.

Its function is as follows. Acts as a chaperone. The protein is Chaperone protein DnaK of Bacteroides fragilis (strain ATCC 25285 / DSM 2151 / CCUG 4856 / JCM 11019 / LMG 10263 / NCTC 9343 / Onslow / VPI 2553 / EN-2).